Consider the following 318-residue polypeptide: Oxidoreductase swnN (318 aa).

It belongs to the NmrA-type oxidoreductase family. Isoflavone reductase subfamily.

Its pathway is mycotoxin biosynthesis. Aminotransferase; part of the gene cluster that mediates the biosynthesis of swainsonine (SW), a cytotoxic fungal alkaloid and a potential cancer therapy drug. Swainsonine production occurs via a multibranched pathway and is dispensable for fungal colonization of plants and infection of insect hosts. The first step of swainsonine biosynthesis is the production of the precursor pipecolic acid (PA) via conversion of L-lysine (Lys) to 1-piperideine-6-carboxylate (P6C) by the aminotransferase swnA, the latter being further reduced to PA by the reductase swnR. The PKS-NRPS hybrid synthetase swnK uptakes and condensates PA and malonyl-CoA with and without skipping of the ketoreductase (KR) domain in order to produce 3 intermediates, 1-oxoindolizidine, (1S)-1-hydroxyindolizin, and (1R)-1-hydroxyindolizine; with the transisomer (1S)-1-hydroxyindolizin being predominant. The terminal thioester reductase (TE) domain of swnK is involved in reduction of the thioester bond to release the intermediate aldehydes. The oxidoreductase swnN could contribute to the reduction of 1-oxoindolizidine to (1S)-1-hydroxyindolizin and (1R)-1-hydroxyindolizine, contributing to the major route of SW production. The dioxygenase swnH2 would be responsible for the oxidization of (1R)-1-hydroxyindolizine into (1R,2S)-1,2-dihydroxyindolizine and of (1S)-1-hydroxyindolizin to yield both (1R,2S)-1,2-dihydroxyindolizine and (1S,2S)-1,2-dihydroxyindolizine. The dioxygenase swnH1 then performs the conversion of the 1,2-dihydroxyindolizine epimers to SW. In Arthroderma benhamiae (strain ATCC MYA-4681 / CBS 112371) (Trichophyton mentagrophytes), this protein is Oxidoreductase swnN.